We begin with the raw amino-acid sequence, 106 residues long: ATP-dependent Clp protease adapter protein ClpS (106 aa).

This sequence belongs to the ClpS family. As to quaternary structure, binds to the N-terminal domain of the chaperone ClpA.

Its function is as follows. Involved in the modulation of the specificity of the ClpAP-mediated ATP-dependent protein degradation. This is ATP-dependent Clp protease adapter protein ClpS from Serratia proteamaculans (strain 568).